The primary structure comprises 507 residues: Maturase K (507 aa).

It belongs to the intron maturase 2 family. MatK subfamily.

The protein resides in the plastid. The protein localises to the chloroplast. Functionally, usually encoded in the trnK tRNA gene intron. Probably assists in splicing its own and other chloroplast group II introns. In Cupaniopsis anacardioides (Carrotwood), this protein is Maturase K.